Consider the following 191-residue polypeptide: Peptidyl-tRNA hydrolase (191 aa).

Residue Y15 participates in tRNA binding. The active-site Proton acceptor is the H20. Residues F66, N68, and N114 each contribute to the tRNA site.

This sequence belongs to the PTH family. In terms of assembly, monomer.

The protein localises to the cytoplasm. It carries out the reaction an N-acyl-L-alpha-aminoacyl-tRNA + H2O = an N-acyl-L-amino acid + a tRNA + H(+). Functionally, hydrolyzes ribosome-free peptidyl-tRNAs (with 1 or more amino acids incorporated), which drop off the ribosome during protein synthesis, or as a result of ribosome stalling. Its function is as follows. Catalyzes the release of premature peptidyl moieties from peptidyl-tRNA molecules trapped in stalled 50S ribosomal subunits, and thus maintains levels of free tRNAs and 50S ribosomes. The sequence is that of Peptidyl-tRNA hydrolase from Streptococcus agalactiae serotype Ia (strain ATCC 27591 / A909 / CDC SS700).